The chain runs to 117 residues: UPF0102 protein FTW_1281 (117 aa).

Belongs to the UPF0102 family.

The polypeptide is UPF0102 protein FTW_1281 (Francisella tularensis subsp. tularensis (strain WY96-3418)).